The following is a 253-amino-acid chain: 3-deoxy-manno-octulosonate cytidylyltransferase (253 aa).

It belongs to the KdsB family.

It is found in the cytoplasm. It catalyses the reaction 3-deoxy-alpha-D-manno-oct-2-ulosonate + CTP = CMP-3-deoxy-beta-D-manno-octulosonate + diphosphate. The protein operates within nucleotide-sugar biosynthesis; CMP-3-deoxy-D-manno-octulosonate biosynthesis; CMP-3-deoxy-D-manno-octulosonate from 3-deoxy-D-manno-octulosonate and CTP: step 1/1. It participates in bacterial outer membrane biogenesis; lipopolysaccharide biosynthesis. In terms of biological role, activates KDO (a required 8-carbon sugar) for incorporation into bacterial lipopolysaccharide in Gram-negative bacteria. In Acinetobacter baumannii (strain AYE), this protein is 3-deoxy-manno-octulosonate cytidylyltransferase.